The chain runs to 730 residues: ATP-binding cassette sub-family D member 1 (730 aa).

The next 4 membrane-spanning stretches (helical) occupy residues 24–44, 137–157, 169–189, and 276–296; these read AFSYALVTSAILALTIKVTIP, FCLISRTFLSIYVAALEGALV, ALVLLKWFGIAIPATFVNSMI, and ANIITGPALSIGVIALTAHIL. The ABC transmembrane type-1 domain occupies 136–373; sequence TFCLISRTFL…WFIMLEQFFM (238 aa). Residues 505–727 form the ABC transporter domain; it reads ISLRAVPVVT…MNSDEEQKGQ (223 aa). 538–545 provides a ligand contact to ATP; sequence GPNGCGKS.

It belongs to the ABC transporter superfamily. ABCD family. Peroxisomal fatty acyl CoA transporter (TC 3.A.1.203) subfamily.

Its subcellular location is the peroxisome membrane. The enzyme catalyses an acyl-CoA(out) + ATP + H2O = an acyl-CoA(in) + ADP + phosphate + H(+). Functionally, plays a role in the transport of free very-long-chain fatty acids (VLCFAs) as well as their CoA-esters across the peroxisomal membrane by acting as an ATP-specific binding subunit releasing ADP after ATP hydrolysis. Thus, plays a role in regulation of VLCFAs and energy metabolism namely, in the degradation and biosynthesis of fatty acids by beta-oxidation, mitochondrial function and microsomal fatty acid elongation. The polypeptide is ATP-binding cassette sub-family D member 1 (Drosophila melanogaster (Fruit fly)).